Reading from the N-terminus, the 404-residue chain is Interferon-activable protein 205-A (404 aa).

The Pyrin domain maps to 1–88 (MENEYKRLVL…AEILKKERSE (88 aa)). A disordered region spans residues 85–198 (ERSEVTEETS…KSQPQNQNIP (114 aa)). 2 stretches are compositionally biased toward low complexity: residues 102–112 (ASPATPTSTTS) and 122–132 (TSTTQEETSTA). Residues 137–147 (GMSEEKTDVKK) are compositionally biased toward basic and acidic residues. Residues 168–185 (QSPISQVSSSASSNIPSA) show a composition bias toward low complexity. Polar residues predominate over residues 186–197 (KNQKSQPQNQNI). In terms of domain architecture, HIN-200 spans 192-392 (PQNQNIPRGA…CGDHSFVKVT (201 aa)).

Belongs to the HIN-200 family.

The protein resides in the nucleus. Its function is as follows. May act as a transcriptional regulator in the myeloid lineage. Inhibits cell growth via p53/TP53 and RB1-dependent and independent pathways. This chain is Interferon-activable protein 205-A (Ifi205a), found in Mus musculus (Mouse).